A 1453-amino-acid chain; its full sequence is DNA-directed RNA polymerase IV subunit 1 (1453 aa).

Zn(2+) contacts are provided by Cys56, Cys59, Cys67, His70, Cys97, Cys100, and Cys121. Residues Asp447, Asp449, and Asp451 each coordinate Mg(2+). Residues Pro806–Asp818 are bridging helix.

It belongs to the RNA polymerase beta' chain family. As to quaternary structure, component of the RNA polymerase IV complex. Interacts with NRPD2, NRPD3, NRPD3B, NRPD4, NRPD5, NRPD5B, NRPD6A, NRPD7, NRPD7B, NRPD9A, NRPD9B, NRPD10, NRPD11, NRPD12, RDR2, RDM4, CLSY1, CLSY2, CLSY3, CLSY4 and SHH1. As to expression, mostly expressed in flowers, and, to a lower extent, in leaves.

It localises to the nucleus. It carries out the reaction RNA(n) + a ribonucleoside 5'-triphosphate = RNA(n+1) + diphosphate. Functionally, DNA-dependent RNA polymerase catalyzes the transcription of DNA into RNA using the four ribonucleoside triphosphates as substrates. Largest and catalytic component of RNA polymerase IV which mediates 24-nt short-interfering RNAs (siRNA) accumulation. Implicated in siRNA-directed heterochromatin formation through the action of DCL3 and AGO4, and subsequent DNA methylation-dependent silencing of targeted sequences. Essential component of a self-reinforcing loop coupling de novo DNA methylation to siRNA production. Required for intercellular but not intracellular RNA interference (RNAi) leading to systemic post-transcriptional gene silencing. Involved in the maintenance of post-transcriptional RNA silencing. This is DNA-directed RNA polymerase IV subunit 1 (NRPD1) from Arabidopsis thaliana (Mouse-ear cress).